Reading from the N-terminus, the 240-residue chain is Competence protein ComFC (240 aa).

This sequence belongs to the ComF/GntX family. As to quaternary structure, monomer and dimer in solution. Interacts with ComFA and DprA; ComFA-ComFC form rings about 150 Angstroms in diameter with apparent 6-fold symmetry.

In terms of biological role, involved in transformation (genetic competence for DNA uptake). In Bacillus subtilis (strain 168), this protein is Competence protein ComFC (comFC).